The following is a 73-amino-acid chain: Metallothionein-like protein type 2 (73 aa).

It belongs to the metallothionein superfamily. Type 15 family.

Functionally, metallothioneins have a high content of cysteine residues that bind various heavy metals. The protein is Metallothionein-like protein type 2 of Solanum lycopersicum (Tomato).